The primary structure comprises 326 residues: tRNA uridine(34) hydroxylase (326 aa).

The region spanning 123–217 (ADPEVFVVDT…YLEEVPEEES (95 aa)) is the Rhodanese domain. The active-site Cysteine persulfide intermediate is cysteine 177. The segment at 293 to 326 (AVRGEQHVGGESAKQRQQRRAEKLAKKDVQRKQA) is disordered. Over residues 311–326 (RRAEKLAKKDVQRKQA) the composition is skewed to basic and acidic residues.

The protein belongs to the TrhO family.

The catalysed reaction is uridine(34) in tRNA + AH2 + O2 = 5-hydroxyuridine(34) in tRNA + A + H2O. Catalyzes oxygen-dependent 5-hydroxyuridine (ho5U) modification at position 34 in tRNAs. This chain is tRNA uridine(34) hydroxylase, found in Vibrio campbellii (strain ATCC BAA-1116).